Consider the following 479-residue polypeptide: Cell division protein FtsA (479 aa).

The tract at residues 417–458 is disordered; sequence QGRQTERKENEQRDNTDRQREDTPKQTVKKKEKTGPSFGDKL. Positions 420-440 are enriched in basic and acidic residues; that stretch reads QTERKENEQRDNTDRQREDTP.

Belongs to the FtsA/MreB family. In terms of assembly, self-interacts. Interacts with FtsZ.

It is found in the cell inner membrane. Functionally, cell division protein that is involved in the assembly of the Z ring. May serve as a membrane anchor for the Z ring. In Porphyromonas gingivalis (strain ATCC BAA-308 / W83), this protein is Cell division protein FtsA.